The sequence spans 254 residues: Mitochondrial cardiolipin hydrolase (254 aa).

At 1 to 9 (MERFRWQVA) the chain is on the mitochondrial intermembrane side. The required for mitochondrial localization stretch occupies residues 1–43 (MERFRWQVAAVAAVGLALALEALPSVLCWLRAGRRQQQRPPRR). A helical transmembrane segment spans residues 10–32 (AVAAVGLALALEALPSVLCWLRA). The Cytoplasmic portion of the chain corresponds to 33–254 (GRRQQQRPPR…SKCSHHLSQV (222 aa)). The segment at 49-82 (PSQVTCTEALLQAPGEAPSGPPAGCRCSLPHGES) adopts a C3H1-type; atypical zinc-finger fold. One can recognise a PLD phosphodiesterase domain in the interval 155-182 (DLGYMHHKFAIVDKKVLITGSLNWTTQA). Residues H160, K162, and D167 contribute to the active site.

The protein belongs to the phospholipase D family. MitoPLD/Zucchini subfamily. Homodimer. Interacts with MOV10L1. Interacts with MIGA1 and MIGA2; possibly facilitating homodimer formation. Interacts with GK2.

The protein resides in the mitochondrion outer membrane. Its subcellular location is the nucleus membrane. It localises to the cell membrane. It is found in the golgi apparatus. The catalysed reaction is a cardiolipin + H2O = a 1,2-diacyl-sn-glycero-3-phospho-(1'-sn-glycerol) + a 1,2-diacyl-sn-glycero-3-phosphate + H(+). Its activity is regulated as follows. Single stranded DNA (ssDNA) hydrolase activity does not depend upon, but is stimulated by the presence of Ca(2+) and Mn(2+). MIGA1 and MIGA2 increase PLD6 self-association affinity and affects the homodimer conformation facilitating its phospholipase activity over the nuclease activity. MYC induces its expression and stimulates its phospholipase activity. Functionally, presents phospholipase and nuclease activities, depending on the different physiological conditions. Interaction with Mitoguardin (MIGA1 or MIGA2) affects the dimer conformation, facilitating the lipase activity over the nuclease activity. Plays a key role in mitochondrial fusion and fission via its phospholipase activity. In its phospholipase role, it uses the mitochondrial lipid cardiolipin as substrate to generate phosphatidate (PA or 1,2-diacyl-sn-glycero-3-phosphate), a second messenger signaling lipid. Production of PA facilitates Mitofusin-mediated fusion, whereas the cleavage of PA by the Lipin family of phosphatases produces diacylgycerol (DAG) which promotes mitochondrial fission. Both Lipin and DAG regulate mitochondrial dynamics and membrane fusion/fission, important processes for adapting mitochondrial metabolism to changes in cell physiology. Mitochondrial fusion enables cells to cope with the increased nucleotide demand during DNA synthesis. Mitochondrial function and dynamics are closely associated with biological processes such as cell growth, proliferation, and differentiation. Mediator of MYC activity, promotes mitochondrial fusion and activates AMPK which in turn inhibits YAP/TAZ, thereby inducing cell growth and proliferation. The endonuclease activity plays a critical role in PIWI-interacting RNA (piRNA) biogenesis during spermatogenesis. Implicated in spermatogenesis and sperm fertility in testicular germ cells, its single strand-specific nuclease activity is critical for the biogenesis/maturation of PIWI-interacting RNA (piRNA). MOV10L1 selectively binds to piRNA precursors and funnels them to the endonuclease that catalyzes the first cleavage step of piRNA processing to generate piRNA intermediate fragments that are subsequently loaded to Piwi proteins. Cleaves either DNA or RNA substrates with similar affinity, producing a 5' phosphate end, in this way it participates in the processing of primary piRNA transcripts. piRNAs provide essential protection against the activity of mobile genetic elements. piRNA-mediated transposon silencing is thus critical for maintaining genome stability, in particular in germline cells when transposons are mobilized as a consequence of wide-spread genomic demethylation. PA may act as signaling molecule in the recognition/transport of the precursor RNAs of primary piRNAs. Interacts with tesmin in testes, suggesting a role in spermatogenesis via association with its interacting partner. The protein is Mitochondrial cardiolipin hydrolase (PLD6) of Canis lupus familiaris (Dog).